We begin with the raw amino-acid sequence, 1144 residues long: Nitric oxide synthase, inducible (1144 aa).

The DINNN-motif; mediates interaction with SPSB1, SPSB2 and SPSB4 signature appears at 23 to 27; that stretch reads DINNN. The disordered stretch occupies residues 37 to 59; that stretch reads SPTIQDDPKSHQNGSPQLLTGTA. The segment covering 47 to 59 has biased composition (polar residues); the sequence is HQNGSPQLLTGTA. Zn(2+)-binding residues include C104 and C109. S112 contributes to the (6R)-L-erythro-5,6,7,8-tetrahydrobiopterin binding site. C194 lines the heme b pocket. The L-arginine site is built by Q257, W366, Y367, and E371. (6R)-L-erythro-5,6,7,8-tetrahydrobiopterin is bound by residues R375, I456, W457, and F470. Y485 provides a ligand contact to heme b. Positions 509–529 are calmodulin-binding; that stretch reads FRVLVKVVFFASMLMRKVMAS. One can recognise a Flavodoxin-like domain in the interval 533–671; that stretch reads ATVLFATETG…AFRSWAVQTF (139 aa). FMN-binding residues include T539, E540, T541, K543, and S544. Y569 is modified (phosphotyrosine). Residues S585, T586, S622, C629, E655, and Q659 each contribute to the FMN site. The FAD-binding FR-type domain occupies 724–964; that stretch reads KNVFTMRLKS…VRSVSGFQLP (241 aa). An NADP(+)-binding site is contributed by R744. Positions 766, 900, 902, 903, 918, and 920 each coordinate FAD. T923 serves as a coordination point for NADP(+). FAD-binding residues include Y924, V937, C938, and S939. NADP(+)-binding residues include T978, R1011, S1040, R1041, K1047, Y1049, Q1051, and D1084.

Belongs to the NOS family. In terms of assembly, homodimer. Interacts with NHERF1. Interacts with GAPDH. Interacts with S100A8 and S100A9 to form the iNOS-S100A8/9 transnitrosylase complex. Interacts with SPSB1, SPSB2 and SPSB4. Interacts with ELOC and CUL5 in the presence of SPSB1 or SPSB2 or SPSB4. Forms a complex with ASL, ASS1 and HSP90AA1; the complex regulates cell-autonomous L-arginine synthesis and citrulline recycling while channeling extracellular L-arginine to nitric oxide synthesis pathway. Requires heme b as cofactor. The cofactor is FAD. FMN serves as cofactor. (6R)-L-erythro-5,6,7,8-tetrahydrobiopterin is required as a cofactor. Post-translationally, polyubiquitinated; mediated by SPSB1, SPSB2 and SPSB4, leading to proteasomal degradation. Macrophages.

Its subcellular location is the cytoplasm. The protein resides in the cytosol. It carries out the reaction 2 L-arginine + 3 NADPH + 4 O2 + H(+) = 2 L-citrulline + 2 nitric oxide + 3 NADP(+) + 4 H2O. Its activity is regulated as follows. Not stimulated by calcium/calmodulin. Aspirin inhibits expression and function of this enzyme and effects may be exerted at the level of translational/post-translational modification and directly on the catalytic activity. Its function is as follows. Produces nitric oxide (NO) which is a messenger molecule with diverse functions throughout the body. In macrophages, NO mediates tumoricidal and bactericidal actions. Also has nitrosylase activity and mediates cysteine S-nitrosylation of cytoplasmic target proteins such PTGS2/COX2. As component of the iNOS-S100A8/9 transnitrosylase complex involved in the selective inflammatory stimulus-dependent S-nitrosylation of GAPDH implicated in regulation of the GAIT complex activity and probably multiple targets including ANXA5, EZR, MSN and VIM. Involved in inflammation, enhances the synthesis of pro-inflammatory mediators such as IL6 and IL8. This Mus musculus (Mouse) protein is Nitric oxide synthase, inducible (Nos2).